The primary structure comprises 219 residues: Probable GTP-binding protein EngB (219 aa).

Positions 31-205 (VGVEIAFAGR…LSILNEWCHP (175 aa)) constitute an EngB-type G domain. Residues 39–46 (GRSNAGKS), 66–70 (GRTQL), 84–87 (DLPG), 151–154 (TKSD), and 184–186 (FSA) each bind GTP. 2 residues coordinate Mg(2+): S46 and T68.

The protein belongs to the TRAFAC class TrmE-Era-EngA-EngB-Septin-like GTPase superfamily. EngB GTPase family. Mg(2+) serves as cofactor.

Functionally, necessary for normal cell division and for the maintenance of normal septation. The sequence is that of Probable GTP-binding protein EngB from Shewanella sp. (strain W3-18-1).